The following is a 407-amino-acid chain: Serine hydroxymethyltransferase (407 aa).

Residues leucine 117 and 121-123 contribute to the (6S)-5,6,7,8-tetrahydrofolate site; that span reads GHL. Lysine 226 is modified (N6-(pyridoxal phosphate)lysine). Glutamate 242 contributes to the (6S)-5,6,7,8-tetrahydrofolate binding site.

The protein belongs to the SHMT family. Homodimer. Requires pyridoxal 5'-phosphate as cofactor.

It localises to the cytoplasm. It catalyses the reaction (6R)-5,10-methylene-5,6,7,8-tetrahydrofolate + glycine + H2O = (6S)-5,6,7,8-tetrahydrofolate + L-serine. It participates in one-carbon metabolism; tetrahydrofolate interconversion. Its pathway is amino-acid biosynthesis; glycine biosynthesis; glycine from L-serine: step 1/1. Its function is as follows. Catalyzes the reversible interconversion of serine and glycine with tetrahydrofolate (THF) serving as the one-carbon carrier. This reaction serves as the major source of one-carbon groups required for the biosynthesis of purines, thymidylate, methionine, and other important biomolecules. Also exhibits THF-independent aldolase activity toward beta-hydroxyamino acids, producing glycine and aldehydes, via a retro-aldol mechanism. The polypeptide is Serine hydroxymethyltransferase (Thermus thermophilus (strain ATCC BAA-163 / DSM 7039 / HB27)).